The sequence spans 434 residues: Cobyrinate a,c-diamide synthase (434 aa).

A GATase cobBQ-type domain is found at 239–430; it reads KMAIAYDPAF…SHLHFSNFQL (192 aa). The active-site Nucleophile is the Cys320.

This sequence belongs to the CobB/CbiA family. The cofactor is Mg(2+).

It catalyses the reaction cob(II)yrinate + 2 L-glutamine + 2 ATP + 2 H2O = cob(II)yrinate a,c diamide + 2 L-glutamate + 2 ADP + 2 phosphate + 2 H(+). Its pathway is cofactor biosynthesis; adenosylcobalamin biosynthesis; cob(II)yrinate a,c-diamide from sirohydrochlorin (anaerobic route): step 10/10. In terms of biological role, catalyzes the ATP-dependent amidation of the two carboxylate groups at positions a and c of cobyrinate, using either L-glutamine or ammonia as the nitrogen source. This chain is Cobyrinate a,c-diamide synthase, found in Saccharolobus solfataricus (strain ATCC 35092 / DSM 1617 / JCM 11322 / P2) (Sulfolobus solfataricus).